A 146-amino-acid chain; its full sequence is Pre-mRNA-splicing factor cwf14 (146 aa).

This sequence belongs to the BUD31 (G10) family. As to quaternary structure, belongs to the 40S cdc5-associated complex (or cwf complex), a spliceosome sub-complex reminiscent of a late-stage spliceosome composed of the U2, U5 and U6 snRNAs and at least brr2, cdc5, cwf2/prp3, cwf3/syf1, cwf4/syf3, cwf5/ecm2, spp42/cwf6, cwf7/spf27, cwf8, cwf9, cwf10, cwf11, cwf12, prp45/cwf13, cwf14, cwf15, cwf16, cwf17, cwf18, cwf19, cwf20, cwf21, cwf22, cwf23, cwf24, cwf25, cwf26, cyp7/cwf27, cwf28, cwf29/ist3, lea1, msl1, prp5/cwf1, prp10, prp12/sap130, prp17, prp22, sap61, sap62, sap114, sap145, slu7, smb1, smd1, smd3, smf1, smg1 and syf2.

It localises to the nucleus. Its function is as follows. Involved in mRNA splicing where it associates with cdc5 and the other cwf proteins as part of the spliceosome. The polypeptide is Pre-mRNA-splicing factor cwf14 (cwf14) (Schizosaccharomyces pombe (strain 972 / ATCC 24843) (Fission yeast)).